The sequence spans 187 residues: Elongation factor P (187 aa).

It belongs to the elongation factor P family.

It localises to the cytoplasm. It functions in the pathway protein biosynthesis; polypeptide chain elongation. Involved in peptide bond synthesis. Stimulates efficient translation and peptide-bond synthesis on native or reconstituted 70S ribosomes in vitro. Probably functions indirectly by altering the affinity of the ribosome for aminoacyl-tRNA, thus increasing their reactivity as acceptors for peptidyl transferase. In Parasynechococcus marenigrum (strain WH8102), this protein is Elongation factor P.